The following is a 137-amino-acid chain: ATP synthase epsilon chain (137 aa).

It belongs to the ATPase epsilon chain family. As to quaternary structure, F-type ATPases have 2 components, CF(1) - the catalytic core - and CF(0) - the membrane proton channel. CF(1) has five subunits: alpha(3), beta(3), gamma(1), delta(1), epsilon(1). CF(0) has three main subunits: a, b and c.

It localises to the cellular thylakoid membrane. Its function is as follows. Produces ATP from ADP in the presence of a proton gradient across the membrane. In Trichormus variabilis (strain ATCC 29413 / PCC 7937) (Anabaena variabilis), this protein is ATP synthase epsilon chain.